The sequence spans 420 residues: Cell division protein FtsA (420 aa).

The protein belongs to the FtsA/MreB family. In terms of assembly, self-interacts. Interacts with FtsZ.

Its subcellular location is the cell inner membrane. In terms of biological role, cell division protein that is involved in the assembly of the Z ring. May serve as a membrane anchor for the Z ring. The polypeptide is Cell division protein FtsA (Escherichia coli O157:H7).